Consider the following 838-residue polypeptide: E3 ubiquitin-protein ligase RNF19A (838 aa).

Positions 128–351 (DFIECPLCLL…LSPSGCTFWG (224 aa)) are TRIAD supradomain. Zn(2+) is bound by residues cysteine 132, cysteine 135, cysteine 150, histidine 152, cysteine 155, cysteine 158, cysteine 176, cysteine 179, cysteine 219, cysteine 224, cysteine 241, cysteine 246, cysteine 251, cysteine 254, histidine 259, cysteine 264, cysteine 301, and cysteine 304. Residues 132–179 (CPLCLLRHSKDRFPEIMTCHHRSCVDCLRQYLRIEISESRVNISCPEC) form an RING-type 1 zinc finger. The segment at 199 to 264 (EKYEEFMLRR…KQIWHPNQTC (66 aa)) adopts an IBR-type zinc-finger fold. An RING-type 2; atypical zinc finger spans residues 301 to 332 (CPRCAAYIIKMNDGSCNHMTCAVCGCEFCWLC). The active site involves cysteine 316. The Zn(2+) site is built by cysteine 321, cysteine 324, cysteine 329, cysteine 332, histidine 340, and cysteine 347. 2 helical membrane-spanning segments follow: residues 368–388 (LVGAPVGIALIAGIAIPAMII) and 424–444 (VIVSPVVAAVTVGIGVPIMLA). Disordered regions lie at residues 622–685 (SKPS…SNMK) and 700–721 (QQSTNSSEFEAPSLSDSMPSVA). Position 631 is a phosphoserine (serine 631). Residues 631–644 (SGSSSVDDGSAARS) are compositionally biased toward low complexity. The tract at residues 660–838 (ATKWSKEATA…ELKVAIQTDI (179 aa)) is interaction with CASR. The span at 671 to 683 (KKSKSGKLRKKSN) shows a compositional bias: basic residues. The segment covering 700-717 (QQSTNSSEFEAPSLSDSM) has biased composition (polar residues).

Belongs to the RBR family. RNF19 subfamily. Interacts with UBE2L3 and UBE2L6. Also interacts with transcription factor Sp1. Interacts with SNCAIP, CASR and VCP.

The protein localises to the membrane. Its subcellular location is the cytoplasm. The protein resides in the cytoskeleton. It is found in the microtubule organizing center. It localises to the centrosome. The enzyme catalyses [E2 ubiquitin-conjugating enzyme]-S-ubiquitinyl-L-cysteine + [acceptor protein]-L-lysine = [E2 ubiquitin-conjugating enzyme]-L-cysteine + [acceptor protein]-N(6)-ubiquitinyl-L-lysine.. It participates in protein modification; protein ubiquitination. E3 ubiquitin-protein ligase which accepts ubiquitin from E2 ubiquitin-conjugating enzymes UBE2L3 and UBE2L6 in the form of a thioester and then directly transfers the ubiquitin to targeted substrates, such as SNCAIP or CASR. This is E3 ubiquitin-protein ligase RNF19A (RNF19A) from Sus scrofa (Pig).